The primary structure comprises 108 residues: UPF0060 membrane protein SA2130 (108 aa).

4 consecutive transmembrane segments (helical) span residues 5–25 (IFIF…IWLW), 31–51 (SSLV…IATF), 60–80 (VYAA…MVVD), and 86–106 (KYDV…LLPS).

It belongs to the UPF0060 family.

The protein localises to the cell membrane. The polypeptide is UPF0060 membrane protein SA2130 (Staphylococcus aureus (strain N315)).